We begin with the raw amino-acid sequence, 361 residues long: MVSLREIRAHNAGLRDAWAGHRHVSLFVGATKGIGLATIMELIQRIDEPTVYIVCRSTAQFAQRIAELQRLNRRAKLVALYGQISLLSEVDRICNLVLRKESQLDLLFMSPGYLPNGHPSYTPEGLEELASLAYYCRLRFTVNLLPLLERTAKTNYPDEPSNRRPRVFSVLNGGNERALPFVPEDLQSEKSYTMLNHVAHTTLMNTLALEHLAHKKPSVDFVHESPGKVQTDIVASFLQSPERTRSRLVLWRWLKGMLMLVLQAVLLPVFYVVAMPLAESGERRLYEATVDLSQQWQKQLQSPPYNGIVAAPGFYRMKHTSDIVMDDTVLQAYRALGMPERAWEHTMAVFRSVLDKGSGKK.

Residues 257-277 (MLMLVLQAVLLPVFYVVAMPL) traverse the membrane as a helical segment.

The protein belongs to the NmrA-type oxidoreductase family.

The protein resides in the membrane. Its function is as follows. Oxidoreductase; part of the gene cluster 23 that mediates the biosynthesis of a family of 2-pyridones known as leporins. The hybrid PKS-NRPS synthetase lepA and the enoyl reductase lepG are responsible for fusion of phenylalanine with a hexaketide and subsequent release of the stable tetramic acid precursor, pre-leporin C. Because lepA lacks a designated enoylreductase (ER) domain, the required activity is provided the enoyl reductase lepG. It is possible that the dehydrogenase lepF also participates in production of pre-leporin C. Cytochrome P450 monooxygenase lepH is then required for the ring expansion step to yield leporin C. Leporin C is then presumably further oxidized by the N-hydroxylase lepD to form leporin B. LepI may possess a function in biosynthesis upstream of lepA. Leporin B is further oxidized in the presence of ferric ion to give the leporin B trimer-iron chelate, but whether or not this reaction is catalyzed by an enzyme in the pathway or by ferric ion is not determined yet. The sequence is that of Oxidoreductase lepF from Aspergillus flavus (strain ATCC 200026 / FGSC A1120 / IAM 13836 / NRRL 3357 / JCM 12722 / SRRC 167).